A 273-amino-acid chain; its full sequence is Zinc finger protein 80 (273 aa).

2 consecutive C2H2-type zinc fingers follow at residues 49-71 and 77-99; these read YKCKECGSVFNKNSLLVRHQQIH and YECQECGKAFPEKVDFVRPMRIH. The segment at 105–127 adopts a C2H2-type 3; atypical zinc-finger fold; sequence CKCVECGKVFNRRSHLLCYRQIH. 4 C2H2-type zinc fingers span residues 133-155, 161-183, 189-211, and 217-239; these read YECSECGKTFSYHSVFIQHRVTH, FGCKECGKTFYYNSSLTRHMKIH, CKCSECGKTFTYRSVFFRHSMTH, and YECKECGKGFYYSYSLTRHTRSH.

The protein belongs to the krueppel C2H2-type zinc-finger protein family.

It localises to the nucleus. In terms of biological role, may be involved in transcriptional regulation. This Homo sapiens (Human) protein is Zinc finger protein 80 (ZNF80).